Reading from the N-terminus, the 398-residue chain is Lipase member K (398 aa).

An N-terminal signal peptide occupies residues 1 to 19 (MWWLLATTCCVLLSGPIDG). The 300-residue stretch at 78–377 (VVYLQHGLIA…HYNHMDFYLG (300 aa)) folds into the AB hydrolase-1 domain. Catalysis depends on Ser171, which acts as the Nucleophile. The cysteines at positions 245 and 254 are disulfide-linked. Asn270 and Asn326 each carry an N-linked (GlcNAc...) asparagine glycan. Residues Asp342 and His371 each act as charge relay system in the active site.

This sequence belongs to the AB hydrolase superfamily. Lipase family.

It localises to the secreted. In terms of biological role, plays a highly specific role in the last step of keratinocyte differentiation. May have an essential function in lipid metabolism of the most differentiated epidermal layers. The sequence is that of Lipase member K (Lipk) from Mus musculus (Mouse).